The chain runs to 591 residues: Probable indole-3-acetic acid-amido synthetase GH3.11 (591 aa).

This sequence belongs to the IAA-amido conjugating enzyme family. As to expression, expressed in etiolated and green seedlings, roots, callus and highly in flowers.

Its function is as follows. May catalyze the synthesis of indole-3-acetic acid (IAA)-amino acid conjugates, providing a mechanism for the plant to cope with the presence of excess auxin. The chain is Probable indole-3-acetic acid-amido synthetase GH3.11 (GH3.11) from Oryza sativa subsp. japonica (Rice).